The sequence spans 460 residues: tRNA hydroxylation protein P (460 aa).

It belongs to the peptidase U32 family.

Involved in prephenate-dependent formation of 5-hydroxyuridine (ho5U) modification at position 34 in tRNAs, the first step in 5-carboxymethoxyuridine (cmo5U) biosynthesis. This Haemophilus influenzae (strain ATCC 51907 / DSM 11121 / KW20 / Rd) protein is tRNA hydroxylation protein P.